The primary structure comprises 323 residues: Acetyl esterase (323 aa).

Positions 91–93 (HGG) match the Involved in the stabilization of the negatively charged intermediate by the formation of the oxyanion hole motif. Active-site residues include serine 165, aspartate 262, and histidine 292.

This sequence belongs to the 'GDXG' lipolytic enzyme family. Homodimer. Interacts with MalT and MelA.

It is found in the cytoplasm. Its function is as follows. Displays esterase activity towards short chain fatty esters (acyl chain length of up to 8 carbons). Able to hydrolyze triacetylglycerol (triacetin) and tributyrylglycerol (tributyrin), but not trioleylglycerol (triolein) or cholesterol oleate. Negatively regulates MalT activity by antagonizing maltotriose binding. Inhibits MelA galactosidase activity. The sequence is that of Acetyl esterase from Salmonella paratyphi B (strain ATCC BAA-1250 / SPB7).